A 524-amino-acid chain; its full sequence is Cytochrome P450 1A1 (524 aa).

Positions 33 to 44 are mitochondrial targeting signal; the sequence is TRTWVPKGLKSP. The O-linked (GlcNAc) serine glycan is linked to S71. Substrate is bound at residue F228. C461 serves as a coordination point for heme.

It belongs to the cytochrome P450 family. Both Cytochrome P450MT2A and Cytochrome P450MT2B interact with cytosolic chaperones HSP70 and HSP90; this interaction is required for initial targeting to mitochondria. P450MT2B interacts (via mitochondrial targeting signal) with TOMM40 (via N-terminus); this interaction is required for translocation across the mitochondrial outer membrane. Heme is required as a cofactor. Post-translationally, two forms; MT2A (long form) and MT2B (short form); are produced by NH2-terminal proteolytic cleavage. This cleavage activates a cryptic mitochondrial targeting signal. As to expression, liver.

It localises to the cytoplasm. Its subcellular location is the endoplasmic reticulum membrane. The protein resides in the mitochondrion inner membrane. The protein localises to the microsome membrane. The enzyme catalyses an organic molecule + reduced [NADPH--hemoprotein reductase] + O2 = an alcohol + oxidized [NADPH--hemoprotein reductase] + H2O + H(+). It carries out the reaction estrone + reduced [NADPH--hemoprotein reductase] + O2 = 2-hydroxyestrone + oxidized [NADPH--hemoprotein reductase] + H2O + H(+). It catalyses the reaction estrone + reduced [NADPH--hemoprotein reductase] + O2 = 4-hydroxyestrone + oxidized [NADPH--hemoprotein reductase] + H2O + H(+). The catalysed reaction is estrone + reduced [NADPH--hemoprotein reductase] + O2 = 6alpha-hydroxyestrone + oxidized [NADPH--hemoprotein reductase] + H2O + H(+). The enzyme catalyses estrone + reduced [NADPH--hemoprotein reductase] + O2 = 15alpha-hydroxyestrone + oxidized [NADPH--hemoprotein reductase] + H2O + H(+). It carries out the reaction estrone + reduced [NADPH--hemoprotein reductase] + O2 = 16alpha-hydroxyestrone + oxidized [NADPH--hemoprotein reductase] + H2O + H(+). It catalyses the reaction 17beta-estradiol + reduced [NADPH--hemoprotein reductase] + O2 = 2-hydroxy-17beta-estradiol + oxidized [NADPH--hemoprotein reductase] + H2O + H(+). The catalysed reaction is 17beta-estradiol + reduced [NADPH--hemoprotein reductase] + O2 = 4-hydroxy-17beta-estradiol + oxidized [NADPH--hemoprotein reductase] + H2O + H(+). The enzyme catalyses 17beta-estradiol + reduced [NADPH--hemoprotein reductase] + O2 = 6alpha-hydroxy-17beta-estradiol + oxidized [NADPH--hemoprotein reductase] + H2O + H(+). It carries out the reaction 17beta-estradiol + reduced [NADPH--hemoprotein reductase] + O2 = 7alpha-hydroxy-17beta-estradiol + oxidized [NADPH--hemoprotein reductase] + H2O + H(+). It catalyses the reaction 17beta-estradiol + reduced [NADPH--hemoprotein reductase] + O2 = 15alpha-hydroxy-17beta-estradiol + oxidized [NADPH--hemoprotein reductase] + H2O + H(+). The catalysed reaction is (5Z,8Z,11Z)-eicosatrienoate + reduced [NADPH--hemoprotein reductase] + O2 = 19-hydroxy-(5Z,8Z,11Z)-eicosatrienoate + oxidized [NADPH--hemoprotein reductase] + H2O + H(+). The enzyme catalyses (5Z,8Z,11Z,14Z)-eicosatetraenoate + reduced [NADPH--hemoprotein reductase] + O2 = 16-hydroxy-(5Z,8Z,11Z,14Z)-eicosatetraenoate + oxidized [NADPH--hemoprotein reductase] + H2O + H(+). It carries out the reaction (5Z,8Z,11Z,14Z)-eicosatetraenoate + reduced [NADPH--hemoprotein reductase] + O2 = 17-hydroxy-(5Z,8Z,11Z,14Z)-eicosatetraenoate + oxidized [NADPH--hemoprotein reductase] + H2O + H(+). It catalyses the reaction (5Z,8Z,11Z,14Z)-eicosatetraenoate + reduced [NADPH--hemoprotein reductase] + O2 = 18-hydroxy-(5Z,8Z,11Z,14Z)-eicosatetraenoate + oxidized [NADPH--hemoprotein reductase] + H2O + H(+). The catalysed reaction is (5Z,8Z,11Z,14Z)-eicosatetraenoate + reduced [NADPH--hemoprotein reductase] + O2 = 19-hydroxy-(5Z,8Z,11Z,14Z)-eicosatetraenoate + oxidized [NADPH--hemoprotein reductase] + H2O + H(+). The enzyme catalyses (5Z,8Z,11Z,14Z,17Z)-eicosapentaenoate + reduced [NADPH--hemoprotein reductase] + O2 = 19-hydroxy-(5Z,8Z,11Z,14Z,17Z)-eicosapentaenoate + oxidized [NADPH--hemoprotein reductase] + H2O + H(+). It carries out the reaction (5Z,8Z,11Z,14Z)-eicosatetraenoate + reduced [NADPH--hemoprotein reductase] + O2 = (8R,9S)-epoxy-(5Z,11Z,14Z)-eicosatrienoate + oxidized [NADPH--hemoprotein reductase] + H2O + H(+). It catalyses the reaction (5Z,8Z,11Z,14Z)-eicosatetraenoate + reduced [NADPH--hemoprotein reductase] + O2 = (11R,12S)-epoxy-(5Z,8Z,14Z)-eicosatrienoate + oxidized [NADPH--hemoprotein reductase] + H2O + H(+). The catalysed reaction is (5Z,8Z,11Z,14Z)-eicosatetraenoate + reduced [NADPH--hemoprotein reductase] + O2 = (11S,12R)-epoxy-(5Z,8Z,14Z)-eicosatrienoate + oxidized [NADPH--hemoprotein reductase] + H2O + H(+). The enzyme catalyses (5Z,8Z,11Z,14Z)-eicosatetraenoate + reduced [NADPH--hemoprotein reductase] + O2 = (14R,15S)-epoxy-(5Z,8Z,11Z)-eicosatrienoate + oxidized [NADPH--hemoprotein reductase] + H2O + H(+). It carries out the reaction (5Z,8Z,11Z,14Z,17Z)-eicosapentaenoate + reduced [NADPH--hemoprotein reductase] + O2 = (17R,18S)-epoxy-(5Z,8Z,11Z,14Z)-eicosatetraenoate + oxidized [NADPH--hemoprotein reductase] + H2O + H(+). It catalyses the reaction (4Z,7Z,10Z,13Z,16Z,19Z)-docosahexaenoate + reduced [NADPH--hemoprotein reductase] + O2 = (19S,20R)-epoxy-(4Z,7Z,10Z,13Z,16Z)-docosapentaenoate + oxidized [NADPH--hemoprotein reductase] + H2O + H(+). The catalysed reaction is (4Z,7Z,10Z,13Z,16Z,19Z)-docosahexaenoate + reduced [NADPH--hemoprotein reductase] + O2 = (19R,20S)-epoxy-(4Z,7Z,10Z,13Z,16Z)-docosapentaenoate + oxidized [NADPH--hemoprotein reductase] + H2O + H(+). The enzyme catalyses all-trans-retinol + reduced [NADPH--hemoprotein reductase] + O2 = all-trans-retinal + oxidized [NADPH--hemoprotein reductase] + 2 H2O + H(+). It carries out the reaction all-trans-retinal + reduced [NADPH--hemoprotein reductase] + O2 = all-trans-retinoate + oxidized [NADPH--hemoprotein reductase] + H2O + 2 H(+). It catalyses the reaction (13S)-hydroperoxy-(9Z,11E)-octadecadienoate = 13-oxo-(9Z,11E)-octadecadienoate + H2O. The catalysed reaction is (12S)-hydroperoxy-(5Z,8Z,10E,14Z)-eicosatetraenoate = 12-oxo-(5Z,8Z,10E,14Z)-eicosatetraenoate + H2O. The enzyme catalyses (15S)-hydroperoxy-(5Z,8Z,11Z,13E)-eicosatetraenoate = 15-oxo-(5Z,8Z,11Z,13E)-eicosatetraenoate + H2O. It carries out the reaction (5S)-hydroperoxy-(6E,8Z,11Z,14Z)-eicosatetraenoate = 5-oxo-(6E,8Z,11Z,14Z)-eicosatetraenoate + H2O. Its pathway is steroid hormone biosynthesis. It functions in the pathway lipid metabolism; fatty acid metabolism. The protein operates within cofactor metabolism; retinol metabolism. Functionally, a cytochrome P450 monooxygenase involved in the metabolism of various endogenous substrates, including fatty acids, steroid hormones and vitamins. Mechanistically, uses molecular oxygen inserting one oxygen atom into a substrate, and reducing the second into a water molecule, with two electrons provided by NADPH via cytochrome P450 reductase (CPR; NADPH-ferrihemoprotein reductase). Catalyzes the hydroxylation of carbon-hydrogen bonds. Exhibits high catalytic activity for the formation of hydroxyestrogens from estrone (E1) and 17beta-estradiol (E2), namely 2-hydroxy E1 and E2, as well as D-ring hydroxylated E1 and E2 at the C15alpha and C16alpha positions. Displays different regioselectivities for polyunsaturated fatty acids (PUFA) hydroxylation. Catalyzes the epoxidation of double bonds of certain PUFA. Converts arachidonic acid toward epoxyeicosatrienoic acid (EET) regioisomers, 8,9-, 11,12-, and 14,15-EET, that function as lipid mediators in the vascular system. Displays an absolute stereoselectivity in the epoxidation of eicosapentaenoic acid (EPA) producing the 17(R),18(S) enantiomer. May play an important role in all-trans retinoic acid biosynthesis in extrahepatic tissues. Catalyzes two successive oxidative transformation of all-trans retinol to all-trans retinal and then to the active form all-trans retinoic acid. May also participate in eicosanoids metabolism by converting hydroperoxide species into oxo metabolites (lipoxygenase-like reaction, NADPH-independent). In Rattus norvegicus (Rat), this protein is Cytochrome P450 1A1.